The chain runs to 147 residues: Deoxyuridine 5'-triphosphate nucleotidohydrolase (147 aa).

Mg(2+) is bound at residue Arg24. DUTP contacts are provided by residues Pro68–Ser70, Gly82–Asp85, Tyr88, Gly93, Ile95, and Arg111.

It belongs to the dUTPase family. Mg(2+) serves as cofactor.

It carries out the reaction dUTP + H2O = dUMP + diphosphate + H(+). In terms of biological role, this enzyme is involved in nucleotide metabolism: it produces dUMP, the immediate precursor of thymidine nucleotides and it decreases the intracellular concentration of dUTP so that uracil cannot be incorporated into DNA. The protein is Deoxyuridine 5'-triphosphate nucleotidohydrolase (OPG046) of Camelus.